Reading from the N-terminus, the 100-residue chain is MRTQVLFLIVVLAVMASGDDTAHVYCGRRLATMLLYVCDNQYQVKRPPYISSENEGYGWKWLERQRARQLDEARGKRQGIVEECCNKPCTENELLGYCYK.

An N-terminal signal peptide occupies residues 1–18; the sequence is MRTQVLFLIVVLAVMASG. Disulfide bonds link Cys26/Cys85, Cys38/Cys98, and Cys84/Cys89. A propeptide spans 47–75 (c peptide like); it reads PPYISSENEGYGWKWLERQRARQLDEARG.

The protein belongs to the insulin family. As to quaternary structure, heterodimer of a B chain and an A chain linked by two disulfide bonds.

The protein localises to the secreted. Brain peptide responsible for activation of prothoracic glands to produce ecdysone in insects. The chain is Bombyxin A-2 homolog (SBXA2) from Samia cynthia (Ailanthus silkmoth).